A 393-amino-acid polypeptide reads, in one-letter code: Putative cytochrome P450 143 (393 aa).

Cys342 serves as a coordination point for heme.

The protein belongs to the cytochrome P450 family. Requires heme as cofactor.

The polypeptide is Putative cytochrome P450 143 (cyp143) (Mycobacterium bovis (strain ATCC BAA-935 / AF2122/97)).